We begin with the raw amino-acid sequence, 296 residues long: Maltose/maltodextrin transport system permease protein MalG (296 aa).

Over 1–12 the chain is Cytoplasmic; sequence MAMVQPKSQKAR. Residues 13–35 form a helical membrane-spanning segment; the sequence is LFITHLLLLLFIAAIMFPLLMVV. Residues 36-88 are Periplasmic-facing; the sequence is AISLRQGNFATGSLIPEQISWDHWKLALGFSVEQADGRITPPPFPVLLWLWNS. One can recognise an ABC transmembrane type-1 domain in the interval 85 to 281; the sequence is LWNSVKVAGI…LPITIVFLLA (197 aa). Residues 89–111 traverse the membrane as a helical segment; that stretch reads VKVAGISAIGIVALSTTCAYAFA. Residues 112–123 lie on the Cytoplasmic side of the membrane; it reads RMRFPGKATLLK. Residues 124–143 form a helical membrane-spanning segment; the sequence is GMLIFQMFPAVLSLVALYAL. The Periplasmic portion of the chain corresponds to 144–152; sequence FDRLGEYIP. Residues 153 to 175 traverse the membrane as a helical segment; that stretch reads FIGLNTHGGVIFAYLGGIALHVW. Over 176–204 the chain is Cytoplasmic; that stretch reads TIKGYFETIDSSLEEAAALDGATPWQAFR. The chain crosses the membrane as a helical span at residues 205–227; sequence LVLLPLSVPILAVVFILSFIAAI. Residues 228 to 257 lie on the Periplasmic side of the membrane; the sequence is TEVPVASLLLRDVNSYTLAVGMQQYLNPQN. Residues 258–280 traverse the membrane as a helical segment; sequence YLWGDFAAAAVMSALPITIVFLL. The Cytoplasmic portion of the chain corresponds to 281–296; sequence AQRWLVNGLTAGGVKG.

This sequence belongs to the binding-protein-dependent transport system permease family. MalFG subfamily. In terms of assembly, the complex is composed of two ATP-binding proteins (MalK), two transmembrane proteins (MalG and MalF) and a solute-binding protein (MalE).

It is found in the cell inner membrane. Part of the ABC transporter complex MalEFGK involved in maltose/maltodextrin import. Probably responsible for the translocation of the substrate across the membrane. The sequence is that of Maltose/maltodextrin transport system permease protein MalG (malG) from Escherichia coli O157:H7.